The chain runs to 86 residues: Mu-theraphotoxin-Cg2a 3 (86 aa).

Residues 1–21 (MKVSVVITLAVLGVMFVWASA) form the signal peptide. A propeptide spanning residues 22-50 (AELKERGSDQRDSPAWIKSMERIFQSEER) is cleaved from the precursor. Disulfide bonds link cysteine 52-cysteine 66, cysteine 59-cysteine 71, and cysteine 65-cysteine 78. Phenylalanine 84 is modified (phenylalanine amide).

It belongs to the neurotoxin 10 (Hwtx-1) family. 37 (Jztx-31) subfamily. In terms of tissue distribution, expressed by the venom gland.

Its subcellular location is the secreted. Its function is as follows. Inhibits both peak current and fast inactivation of voltage-gated sodium channels (Nav) channels. Inhibits the inactivation of Nav on DRG neurons (EC(50)=1.77 uM) and peak current of cardiac myocytes (IC(50)=0.90 uM). In Chilobrachys guangxiensis (Chinese earth tiger tarantula), this protein is Mu-theraphotoxin-Cg2a 3.